The sequence spans 389 residues: S-adenosylmethionine synthase (389 aa).

Position 17 (histidine 17) interacts with ATP. Residue aspartate 19 coordinates Mg(2+). K(+) is bound at residue glutamate 45. Glutamate 58 and glutamine 101 together coordinate L-methionine. Residues 101–111 (QSPDIAQGVTE) form a flexible loop region. Residues 168-170 (DSK), 234-235 (RF), aspartate 243, 249-250 (RK), alanine 266, and lysine 270 contribute to the ATP site. Residue aspartate 243 coordinates L-methionine. Lysine 274 contributes to the L-methionine binding site.

The protein belongs to the AdoMet synthase family. As to quaternary structure, homotetramer; dimer of dimers. The cofactor is Mg(2+). Requires K(+) as cofactor.

Its subcellular location is the cytoplasm. The catalysed reaction is L-methionine + ATP + H2O = S-adenosyl-L-methionine + phosphate + diphosphate. The protein operates within amino-acid biosynthesis; S-adenosyl-L-methionine biosynthesis; S-adenosyl-L-methionine from L-methionine: step 1/1. Catalyzes the formation of S-adenosylmethionine (AdoMet) from methionine and ATP. The overall synthetic reaction is composed of two sequential steps, AdoMet formation and the subsequent tripolyphosphate hydrolysis which occurs prior to release of AdoMet from the enzyme. This is S-adenosylmethionine synthase from Geobacter sp. (strain M21).